Consider the following 100-residue polypeptide: Putative septation protein SpoVG (100 aa).

The protein belongs to the SpoVG family.

Its function is as follows. Could be involved in septation. The polypeptide is Putative septation protein SpoVG (Staphylococcus aureus (strain JH1)).